The chain runs to 406 residues: Beta-galactoside alpha-2,6-sialyltransferase 1 (406 aa).

Residues 1-9 (MIHTNLKKK) lie on the Cytoplasmic side of the membrane. Residues 10 to 26 (FSCCVLVFLLFAVICVW) traverse the membrane as a helical; Signal-anchor for type II membrane protein segment. At 27–406 (KEKKKGSYYD…TLPGFRTIHC (380 aa)) the chain is on the lumenal side. 3 disulfide bridges follow: Cys142/Cys406, Cys184/Cys335, and Cys353/Cys364. N-linked (GlcNAc...) asparagine glycans are attached at residues Asn149 and Asn161. Substrate-binding positions include Ser189, Asn212, Asn233, 322 to 324 (SSG), Cys353, Tyr354, Thr365, Tyr369, His370, and Lys376. Tyr369 carries the post-translational modification Phosphotyrosine.

Belongs to the glycosyltransferase 29 family. As to quaternary structure, monomer and homodimer. In terms of processing, N-glycosylated.

The protein resides in the golgi apparatus. It localises to the golgi stack membrane. It is found in the secreted. It carries out the reaction a beta-D-galactoside + CMP-N-acetyl-beta-neuraminate = an N-acetyl-alpha-neuraminyl-(2-&gt;6)-beta-D-galactosyl derivative + CMP + H(+). It functions in the pathway protein modification; protein glycosylation. With respect to regulation, inhibited by CTP. In terms of biological role, transfers sialic acid from CMP-sialic acid to galactose-containing acceptor substrates. In B lymphocytes, generates neuraminidase-sensitive lymphocyte cell-surface differentiation antigens, such as CDw75, HB-6 and CD76. The polypeptide is Beta-galactoside alpha-2,6-sialyltransferase 1 (ST6GAL1) (Homo sapiens (Human)).